Reading from the N-terminus, the 555-residue chain is 6-phosphofructo-2-kinase/fructose-2,6-bisphosphatase 3 (555 aa).

The segment at 1–245 is 6-phosphofructo-2-kinase; that stretch reads MPLELTQSRV…VYYLMNIHVQ (245 aa). ATP is bound at residue 42–50; sequence GLPARGKTY. Arginine 75 and arginine 99 together coordinate beta-D-fructose 6-phosphate. Aspartate 125 is an active-site residue. Positions 127 and 133 each coordinate beta-D-fructose 6-phosphate. The active site involves cysteine 155. Residue 164–169 participates in ATP binding; that stretch reads NIMEVK. Beta-D-fructose 6-phosphate is bound by residues lysine 169, arginine 190, and tyrosine 194. The segment at 246-555 is fructose-2,6-bisphosphatase; it reads PRTIYLCRHG…CHIFSKFSPY (310 aa). Beta-D-fructose 2,6-bisphosphate is bound at residue arginine 253. Histidine 254 acts as the Tele-phosphohistidine intermediate in catalysis. Beta-D-fructose 2,6-bisphosphate-binding residues include asparagine 260 and glycine 266. Glutamate 323 (proton donor/acceptor) is an active-site residue. Tyrosine 334, arginine 348, lysine 352, tyrosine 363, glutamine 389, and arginine 393 together coordinate beta-D-fructose 2,6-bisphosphate. Residue 345–348 coordinates ATP; sequence YALR. ATP is bound by residues 389-393 and tyrosine 425; that span reads QAVLR. The disordered stretch occupies residues 475 to 504; the sequence is KQDAKKGPNPLMRRNSVTPLASPEPTKKPR. Serine 490 carries the phosphoserine; by AMPK and PKA modification. Phosphothreonine is present on threonine 492. Serine 496 carries the phosphoserine modification.

This sequence in the C-terminal section; belongs to the phosphoglycerate mutase family. As to quaternary structure, homodimer. Forms a heterodimer with PFKFB2. Post-translationally, phosphorylation by AMPK stimulates activity.

The catalysed reaction is beta-D-fructose 2,6-bisphosphate + H2O = beta-D-fructose 6-phosphate + phosphate. The enzyme catalyses beta-D-fructose 6-phosphate + ATP = beta-D-fructose 2,6-bisphosphate + ADP + H(+). In terms of biological role, catalyzes both the synthesis and degradation of fructose 2,6-bisphosphate. This chain is 6-phosphofructo-2-kinase/fructose-2,6-bisphosphatase 3 (Pfkfb3), found in Rattus norvegicus (Rat).